Consider the following 93-residue polypeptide: Large ribosomal subunit protein uL23 (93 aa).

Belongs to the universal ribosomal protein uL23 family. As to quaternary structure, part of the 50S ribosomal subunit. Contacts protein L29, and trigger factor when it is bound to the ribosome.

In terms of biological role, one of the early assembly proteins it binds 23S rRNA. One of the proteins that surrounds the polypeptide exit tunnel on the outside of the ribosome. Forms the main docking site for trigger factor binding to the ribosome. The sequence is that of Large ribosomal subunit protein uL23 from Aliarcobacter butzleri (strain RM4018) (Arcobacter butzleri).